A 244-amino-acid chain; its full sequence is Lipoprotein-releasing system ATP-binding protein LolD (244 aa).

An ABC transporter domain is found at 19-244; that stretch reads IRAEALAKTY…KLRELAPSAV (226 aa). Residue 55–62 coordinates ATP; it reads GASGAGKS.

This sequence belongs to the ABC transporter superfamily. Lipoprotein translocase (TC 3.A.1.125) family. As to quaternary structure, the complex is composed of two ATP-binding proteins (LolD) and two transmembrane proteins (LolC and LolE).

It is found in the cell inner membrane. Functionally, part of the ABC transporter complex LolCDE involved in the translocation of mature outer membrane-directed lipoproteins, from the inner membrane to the periplasmic chaperone, LolA. Responsible for the formation of the LolA-lipoprotein complex in an ATP-dependent manner. This Xanthomonas euvesicatoria pv. vesicatoria (strain 85-10) (Xanthomonas campestris pv. vesicatoria) protein is Lipoprotein-releasing system ATP-binding protein LolD.